We begin with the raw amino-acid sequence, 585 residues long: Mitochondrial sodium/calcium exchanger protein (585 aa).

The N-terminal stretch at 1-26 (MASRWLALLWAPVFLCVALILETASG) is a signal peptide. Residues 27–95 (TGDPSTKAHG…GIFCYFPPNL (69 aa)) lie on the Extracellular side of the membrane. Asparagine 46 is a glycosylation site (N-linked (GlcNAc...) asparagine). The helical transmembrane segment at 96–116 (LPLAITLYVFWLLYLFLILGV) threads the bilayer. At 117 to 140 (TAAKFFCPNLSAISTNLKLSHNVA) the chain is on the cytoplasmic side. The chain crosses the membrane as a helical span at residues 141–161 (GVTFLAFGNGAPDIFSALVAF). The Extracellular segment spans residues 162–168 (SDPRTAG). A helical transmembrane segment spans residues 169–189 (LAIGALFGAGVLVTTVVAGGI). Residues 190 to 205 (TILHPFMAASRPFLRD) are Cytoplasmic-facing. A helical membrane pass occupies residues 206 to 226 (IAFYMVAVFLTFTALYLGRIT). Residues 227 to 229 (LTW) lie on the Extracellular side of the membrane. Residues 230 to 250 (ALGYLGLYVFYVVTVIICTWV) form a helical membrane-spanning segment. Residues 251-325 (YQRQRSRSLV…KWRTQSISWR (75 aa)) lie on the Cytoplasmic side of the membrane. Residue serine 258 is modified to Phosphoserine; by PKA. A helical transmembrane segment spans residues 326 to 346 (VLKVVKLPVEFLLLLTVPVVD). At 347–360 (PDKDDRNWKRPLNC) the chain is on the extracellular side. The helical transmembrane segment at 361–381 (LQLVISPLVLVLTLQSGVYGI) threads the bilayer. Over 382–383 (YE) the chain is Cytoplasmic. The helical transmembrane segment at 384–404 (IGGLLPVWAVVVIVGTALASV) threads the bilayer. Residues 405–416 (TFFATSNREPPR) are Extracellular-facing. The chain crosses the membrane as a helical span at residues 417 to 437 (LHWLFAFLGFLTSALWINAAA). Topologically, residues 438–445 (TEVVNILR) are cytoplasmic. Residues 446–466 (SLGVIFRLSNTVLGLTLLAWG) traverse the membrane as a helical segment. Topologically, residues 467–491 (NSIGDAFSDFTLARQGYPRMAFSAC) are extracellular. The chain crosses the membrane as a helical span at residues 492–512 (FGGIIFNILVGVGLGCLLQII). Residues 513–525 (RNHVVEVKLEPDG) lie on the Cytoplasmic side of the membrane. A helical membrane pass occupies residues 526–546 (LLVWVLASALGLSLIFSLVSV). Topologically, residues 547-559 (PLQCFQLSKAYGL) are extracellular. The chain crosses the membrane as a helical span at residues 560-580 (CLLLFYICFLVVVLLTEFGVI). The Cytoplasmic portion of the chain corresponds to 581 to 585 (HLKKA).

Belongs to the Ca(2+):cation antiporter (CaCA) (TC 2.A.19) family. SLC24A subfamily. In terms of processing, phosphorylation at Ser-258 by PKA prevents calcium overload. As to expression, ubiquitously expressed. Expressed in dental tissues.

Its subcellular location is the mitochondrion inner membrane. It is found in the cell membrane. It catalyses the reaction Ca(2+)(in) + 3 Na(+)(out) = Ca(2+)(out) + 3 Na(+)(in). The catalysed reaction is 3 Li(+)(out) + Ca(2+)(in) = 3 Li(+)(in) + Ca(2+)(out). Its activity is regulated as follows. Inhibited by the sodium/calcium exchanger inhibitor CGP-37157. Strongly inhibited by zinc. Mitochondrial sodium/calcium antiporter that mediates sodium-dependent calcium efflux from mitochondrion, by mediating the exchange of 3 sodium ions per 1 calcium ion. Plays a central role in mitochondrial calcium homeostasis by mediating mitochondrial calcium extrusion: calcium efflux is essential for mitochondrial function and cell survival, notably in cardiomyocytes. Regulates rates of glucose-dependent insulin secretion in pancreatic beta-cells during the first phase of insulin secretion: acts by mediating efflux of calcium from mitochondrion, thereby affecting cytoplasmic calcium responses. Required for store-operated Ca(2+) entry (SOCE) and Ca(2+) release-activated Ca(2+) (CRAC) channel regulation: sodium transport by SLC8B1 leads to promote calcium-shuttling that modulates mitochondrial redox status, thereby regulating SOCE activity. Involved in B-lymphocyte chemotaxis. Able to transport Ca(2+) in exchange of either Li(+) or Na(+), explaining how Li(+) catalyzes Ca(2+) exchange. In contrast to other members of the family its function is independent of K(+). The protein is Mitochondrial sodium/calcium exchanger protein of Mus musculus (Mouse).